We begin with the raw amino-acid sequence, 129 residues long: Follitropin subunit beta (129 aa).

The first 18 residues, 1–18 (MKSVQFCFLFCCWRVICC), serve as a signal peptide directing secretion. 6 disulfides stabilise this stretch: Cys21–Cys69, Cys35–Cys84, Cys38–Cys122, Cys46–Cys100, Cys50–Cys102, and Cys105–Cys112. Residues Asn25 and Asn42 are each glycosylated (N-linked (GlcNAc...) asparagine).

It belongs to the glycoprotein hormones subunit beta family. In terms of assembly, heterodimer. The active follitropin is a heterodimer composed of an alpha chain/CGA shared with other hormones and a unique beta chain/FSHB shown here.

Its subcellular location is the secreted. Functionally, together with the alpha chain CGA constitutes follitropin, the follicle-stimulating hormone, and provides its biological specificity to the hormone heterodimer. Binds FSHR, a G protein-coupled receptor, on target cells to activate downstream signaling pathways. Follitropin is involved in follicle development and spermatogenesis in reproductive organs. The chain is Follitropin subunit beta (FSHB) from Panthera tigris altaica (Siberian tiger).